A 429-amino-acid polypeptide reads, in one-letter code: 3-phosphoshikimate 1-carboxyvinyltransferase (429 aa).

Residues Lys-11, Ser-12, and Arg-16 each contribute to the 3-phosphoshikimate site. Residue Lys-11 participates in phosphoenolpyruvate binding. The phosphoenolpyruvate site is built by Gly-82 and Arg-110. 3-phosphoshikimate-binding residues include Ser-155, Gln-157, Asp-302, and Lys-329. Residue Gln-157 coordinates phosphoenolpyruvate. Asp-302 (proton acceptor) is an active-site residue. Phosphoenolpyruvate-binding residues include Arg-333 and Arg-385.

Belongs to the EPSP synthase family. As to quaternary structure, monomer.

It localises to the cytoplasm. The enzyme catalyses 3-phosphoshikimate + phosphoenolpyruvate = 5-O-(1-carboxyvinyl)-3-phosphoshikimate + phosphate. Its pathway is metabolic intermediate biosynthesis; chorismate biosynthesis; chorismate from D-erythrose 4-phosphate and phosphoenolpyruvate: step 6/7. Catalyzes the transfer of the enolpyruvyl moiety of phosphoenolpyruvate (PEP) to the 5-hydroxyl of shikimate-3-phosphate (S3P) to produce enolpyruvyl shikimate-3-phosphate and inorganic phosphate. This Helicobacter pylori (strain HPAG1) protein is 3-phosphoshikimate 1-carboxyvinyltransferase.